The chain runs to 312 residues: MPVYRPPRIAASEITPERFFLDRRSFLAAAGGLVLGGTGMAHAAALKTSASPYKVDETLTPEKDVTSYNNFYEFGTGKADPATNSASFKPTPWTVKVDGLVGKPRQFGLDELLALPLEERIYRMRCVEAWSMVIPWVGFPLASLLDKVEPLGSAKYVAFETVVRPEEMPGQAGYFQPLPWPYQEGLRLDEARHPLTILAVGLYGKTLPNQNGAPLRLVVPWKYGFKGIKSIVRISLTETAPPCTWNLAAPDEYGFYANVNPAVDHPRWSQATENRIGEGGFFGSNRRDTLPFNGYADEVAGLYAGMDLRVNF.

Positions 1 to 45 (MPVYRPPRIAASEITPERFFLDRRSFLAAAGGLVLGGTGMAHAAA) form a signal peptide, tat-type signal. Residues N69, 72–73 (YE), C126, T161, N211, R216, and 227–229 (GIK) each bind Mo-molybdopterin.

This sequence belongs to the MsrP family. In terms of assembly, heterodimer of a catalytic subunit (MsrP) and a heme-binding subunit (MsrQ). Mo-molybdopterin is required as a cofactor. In terms of processing, predicted to be exported by the Tat system. The position of the signal peptide cleavage has not been experimentally proven.

It is found in the periplasm. It catalyses the reaction L-methionyl-[protein] + a quinone + H2O = L-methionyl-(S)-S-oxide-[protein] + a quinol. It carries out the reaction L-methionyl-[protein] + a quinone + H2O = L-methionyl-(R)-S-oxide-[protein] + a quinol. Its function is as follows. Part of the MsrPQ system that repairs oxidized periplasmic proteins containing methionine sulfoxide residues (Met-O), using respiratory chain electrons. Thus protects these proteins from oxidative-stress damage caused by reactive species of oxygen and chlorine generated by the host defense mechanisms. MsrPQ is essential for the maintenance of envelope integrity under bleach stress, rescuing a wide series of structurally unrelated periplasmic proteins from methionine oxidation. The catalytic subunit MsrP is non-stereospecific, being able to reduce both (R-) and (S-) diastereoisomers of methionine sulfoxide. The chain is Protein-methionine-sulfoxide reductase catalytic subunit MsrP from Sinorhizobium fredii (strain NBRC 101917 / NGR234).